Here is a 316-residue protein sequence, read N- to C-terminus: Phosphoribosylaminoimidazole-succinocarboxamide synthase (316 aa).

Belongs to the SAICAR synthetase family.

The enzyme catalyses 5-amino-1-(5-phospho-D-ribosyl)imidazole-4-carboxylate + L-aspartate + ATP = (2S)-2-[5-amino-1-(5-phospho-beta-D-ribosyl)imidazole-4-carboxamido]succinate + ADP + phosphate + 2 H(+). The protein operates within purine metabolism; IMP biosynthesis via de novo pathway; 5-amino-1-(5-phospho-D-ribosyl)imidazole-4-carboxamide from 5-amino-1-(5-phospho-D-ribosyl)imidazole-4-carboxylate: step 1/2. The protein is Phosphoribosylaminoimidazole-succinocarboxamide synthase of Flavobacterium psychrophilum (strain ATCC 49511 / DSM 21280 / CIP 103535 / JIP02/86).